A 135-amino-acid chain; its full sequence is ATP synthase epsilon chain (135 aa).

This sequence belongs to the ATPase epsilon chain family. As to quaternary structure, F-type ATPases have 2 components, CF(1) - the catalytic core - and CF(0) - the membrane proton channel. CF(1) has five subunits: alpha(3), beta(3), gamma(1), delta(1), epsilon(1). CF(0) has three main subunits: a, b and c.

The protein resides in the cell inner membrane. In terms of biological role, produces ATP from ADP in the presence of a proton gradient across the membrane. The sequence is that of ATP synthase epsilon chain from Brucella abortus (strain S19).